The sequence spans 270 residues: DNA packaging protein OPG160 (270 aa).

25-32 (GGSGSGKT) provides a ligand contact to ATP.

Belongs to the orthopoxvirus OPG160 protein family. As to quaternary structure, interacts with protein OPG137.

Its function is as follows. Participates in viral DNA packaging and virion morphogenesis. This Variola virus (isolate Human/India/Ind3/1967) (VARV) protein is DNA packaging protein OPG160 (OPG160).